Here is a 975-residue protein sequence, read N- to C-terminus: Glycine dehydrogenase (decarboxylating) (975 aa).

At lysine 702 the chain carries N6-(pyridoxal phosphate)lysine.

The protein belongs to the GcvP family. The glycine cleavage system is composed of four proteins: P, T, L and H. The cofactor is pyridoxal 5'-phosphate.

The enzyme catalyses N(6)-[(R)-lipoyl]-L-lysyl-[glycine-cleavage complex H protein] + glycine + H(+) = N(6)-[(R)-S(8)-aminomethyldihydrolipoyl]-L-lysyl-[glycine-cleavage complex H protein] + CO2. Functionally, the glycine cleavage system catalyzes the degradation of glycine. The P protein binds the alpha-amino group of glycine through its pyridoxal phosphate cofactor; CO(2) is released and the remaining methylamine moiety is then transferred to the lipoamide cofactor of the H protein. The polypeptide is Glycine dehydrogenase (decarboxylating) (Xanthomonas campestris pv. campestris (strain 8004)).